A 207-amino-acid polypeptide reads, in one-letter code: Ribosomal RNA large subunit methyltransferase E (207 aa).

The tract at residues Met1–Lys20 is disordered. S-adenosyl-L-methionine contacts are provided by Gly56, Trp58, Asp76, Asp94, and Asp116. Lys156 (proton acceptor) is an active-site residue.

It belongs to the class I-like SAM-binding methyltransferase superfamily. RNA methyltransferase RlmE family.

Its subcellular location is the cytoplasm. It carries out the reaction uridine(2552) in 23S rRNA + S-adenosyl-L-methionine = 2'-O-methyluridine(2552) in 23S rRNA + S-adenosyl-L-homocysteine + H(+). Functionally, specifically methylates the uridine in position 2552 of 23S rRNA at the 2'-O position of the ribose in the fully assembled 50S ribosomal subunit. The sequence is that of Ribosomal RNA large subunit methyltransferase E from Desulfosudis oleivorans (strain DSM 6200 / JCM 39069 / Hxd3) (Desulfococcus oleovorans).